The sequence spans 187 residues: ECF RNA polymerase sigma factor SigW (187 aa).

Positions 3–95 are sigma-70 factor domain-2; sequence MMIKKRIKQV…RKKKPDYYLD (93 aa). The Polymerase core binding motif lies at 47-50; the sequence is DIAQ. The tract at residues 125–187 is sigma-70 factor domain-4; it reads ELSNTIQQKI…EALRKQLRDL (63 aa). The segment at residues 166-184 is a DNA-binding region (H-T-H motif); the sequence is VGTVKTRIHRGREALRKQL.

It belongs to the sigma-70 factor family. ECF subfamily. In terms of assembly, interacts transiently with the RNA polymerase catalytic core formed by RpoA, RpoB, RpoC and RpoZ (2 alpha, 1 beta, 1 beta' and 1 omega subunit) to form the RNA polymerase holoenzyme that can initiate transcription. Forms a heterodimer with cognate anti-sigma factor RsiW, which prevents it from binding to the -10 and -35 promoter elements.

With respect to regulation, extracytoplasmic function (ECF) sigma factors are held in an inactive form by a cognate anti-sigma factor (RsiW for this protein) until released by regulated membrane proteolysis (RIP). RIP occurs when an extracytoplasmic signal (envelope stress) triggers a concerted proteolytic cascade to transmit information and elicit cellular responses. The anti-sigma factor RsiW is a membrane protein, binding sigma-W in the cytoplasm. RsiW is first cut extracytoplasmically (site-1 protease, S1P, by PrsW), then within the membrane itself (site-2 protease, S2P, by RasP), while cytoplasmic proteases (predominantly ClpX-ClpP) finish degrading the regulatory protein, liberating sigma-W. Functionally, sigma factors are initiation factors that promote the attachment of RNA polymerase (RNAP) to specific initiation sites and are then released. Sigma-W controls genes involved in response to cell envelope stress such as antimicrobial peptides, alkaline pH, transport processes and detoxification. The polypeptide is ECF RNA polymerase sigma factor SigW (sigW) (Bacillus subtilis (strain 168)).